A 739-amino-acid chain; its full sequence is Eukaryotic translation initiation factor 3 subunit B (739 aa).

The tract at residues 1–98 is sufficient for interaction with HCR1 and TIF32; the sequence is MSINEEDYLQ…LFIQFKSTES (98 aa). The segment at 1–224 is sufficient for interaction with PIC8; it reads MSINEEDYLQ…GIQSWGGANF (224 aa). Positions 37-124 constitute an RRM domain; the sequence is NYIIVDGAPI…HRLLVNKLSD (88 aa). 7 WD repeats span residues 190-229, 231-293, 301-339, 343-385, 453-502, 537-579, and 592-630; these read PRKGFTSKYAKFSPKGTYLFSIHPQGIQSWGGANFNSIKR, FHQQ…RTFA, QKEMPWPLVKWSYDDKYCARQGPDALAIYETESNFQLLD, VKVD…QTAR, ELKD…KGGV, IENK…ETNK, and DKFSGMTNISWDPSGRFVAAWSTSWLHAIENGYRLYEFT.

The protein belongs to the eIF-3 subunit B family. In terms of assembly, component of the eukaryotic translation initiation factor 3 (eIF-3) complex.

It is found in the cytoplasm. Its function is as follows. RNA-binding component of the eukaryotic translation initiation factor 3 (eIF-3) complex, which is involved in protein synthesis of a specialized repertoire of mRNAs and, together with other initiation factors, stimulates binding of mRNA and methionyl-tRNAi to the 40S ribosome. The eIF-3 complex specifically targets and initiates translation of a subset of mRNAs involved in cell proliferation. The protein is Eukaryotic translation initiation factor 3 subunit B of Candida albicans (strain SC5314 / ATCC MYA-2876) (Yeast).